A 907-amino-acid polypeptide reads, in one-letter code: Lateral signaling target protein 2 homolog (907 aa).

5 disordered regions span residues 339 to 395 (SSDN…DPAN), 463 to 604 (LTDS…SGDA), 662 to 688 (NSSP…PDPA), 716 to 756 (EVNA…SENG), and 770 to 834 (GSGG…EERR). The segment covering 351 to 361 (DISSFYTSNNR) has biased composition (polar residues). Residues 367-393 (EPNEDDDVSESNDEDEDEGEEVDEDDP) are compositionally biased toward acidic residues. Composition is skewed to polar residues over residues 463–475 (LTDS…NPSL) and 486–495 (PVTSSHPIAQ). Residues 501–516 (SEEEGEVDEYDEDDSE) show a composition bias toward acidic residues. Over residues 525-549 (HHTKHQRRHRHHHHHHRKHYSKHRS) the composition is skewed to basic residues. A compositionally biased stretch (low complexity) spans 550-565 (SAAGSAGTSGTTCSAA). Over residues 568-580 (QISSCDTSPSSGG) the composition is skewed to polar residues. Over residues 592-602 (GSSGNSSGGSG) the composition is skewed to gly residues. The span at 742 to 751 (APRTMMTTAA) shows a compositional bias: polar residues. Residues 777–793 (GSSRSSQERSVSLSETS) are compositionally biased toward low complexity. Polar residues predominate over residues 816–826 (PKSVQSEQSGQ). The segment at 845–905 (DGDAPRCMAC…VCRECFVREV (61 aa)) adopts an FYVE-type zinc-finger fold. Residues C851, C854, C867, C870, C875, C878, C897, and C900 each contribute to the Zn(2+) site.

This sequence belongs to the lst-2 family.

Functionally, negative regulator of epidermal growth factor receptor (EGFR) signaling. This chain is Lateral signaling target protein 2 homolog, found in Culex quinquefasciatus (Southern house mosquito).